A 518-amino-acid polypeptide reads, in one-letter code: Macrophage receptor MARCO (518 aa).

The Cytoplasmic segment spans residues 1 to 48 (MGSKELLKEEDFLGSTEDRADFDQAMFPVMETFEINDPVPKKRNGGTF). The helical; Signal-anchor for type II membrane protein transmembrane segment at 49–69 (CMAVMAIHLILLTAGTALLLI) threads the bilayer. Topologically, residues 70–518 (QVLNLQEQLQ…HNEDAGVECS (449 aa)) are extracellular. N-linked (GlcNAc...) asparagine glycans are attached at residues N87 and N138. The interval 147–426 (QIKGERGSPG…GESFQRVRIM (280 aa)) is disordered. A Collagen-like domain is found at 149-418 (KGERGSPGPK…QKGEKGQKGE (270 aa)). Positions 154 to 163 (SPGPKGAPGA) are enriched in low complexity. A compositionally biased stretch (basic and acidic residues) spans 239-250 (KGEHGTKGDKGD). Composition is skewed to low complexity over residues 293 to 314 (PGVK…QGAP) and 325 to 344 (RTGL…PGIA). Basic and acidic residues predominate over residues 410–421 (KGEKGQKGESFQ). The region spanning 423 to 518 (VRIMGGTNRG…HNEDAGVECS (96 aa)) is the SRCR domain. 3 disulfide bridges follow: C446-C507, C459-C517, and C487-C497.

As to quaternary structure, homotrimer; disulfide-linked. Trimers may assemble in larger oligomers thus resulting in the creation of a large surface capable of interacting with very large ligands. In terms of processing, N-glycosylated. As to expression, expressed in subpopulations of macrophages in the spleen and the medullary cord of lymph nodes (at protein level).

The protein resides in the cell membrane. Functionally, pattern recognition receptor (PRR) which binds Gram-positive and Gram-negative bacteria. Also plays a role in binding of unopsonized particles by alveolar macrophages. Binds to the secretoglobin SCGB3A2. This is Macrophage receptor MARCO (Marco) from Mus musculus (Mouse).